We begin with the raw amino-acid sequence, 184 residues long: Bcl-2-modifying factor (184 aa).

The segment at 67–75 (DKATQTLSP) is interaction with DLC2. Residues 133–147 (IARKLQCIADQFHRL) carry the BH3 motif.

The protein belongs to the Bcl-2 family. In terms of assembly, interacts with MCL1, BCL2, BCL2L1/BCL-Xl, BCL2A1 and BCL2L2/BCL-w. Interacts with the myosin V actin motor complex through its binding to DLC2. As to expression, isoform 1 is mainly expressed in B-lymphoid cells. Isoform 2 and isoform 3 are mainly expressed in B-CLL and normal B-cells.

Functionally, may play a role in apoptosis. Isoform 1 seems to be the main initiator. The polypeptide is Bcl-2-modifying factor (BMF) (Homo sapiens (Human)).